The following is a 116-amino-acid chain: Large ribosomal subunit protein bL19 (116 aa).

Belongs to the bacterial ribosomal protein bL19 family.

This protein is located at the 30S-50S ribosomal subunit interface and may play a role in the structure and function of the aminoacyl-tRNA binding site. The polypeptide is Large ribosomal subunit protein bL19 (Staphylococcus aureus (strain Mu3 / ATCC 700698)).